The primary structure comprises 238 residues: MIRLAAFDIDGTLTINRSSTVLCLEAIDALRKLEKNGVIVVLVSSNALPVVVGLKKYIGLSGPAIGETGALIYYGEEEIVATTKYSAKQAYLDVLEKYNEYVYGSWQNMFRLHDYALKIRKQYLSKDNEIYSLIKEYVENKYPYIKVGYSGYAIHLTPKDTGKGKALKQIMEKHGIRREETMGVGDSIMDWEFIKETKIKVAVANADPELRRKADIVTTKPSGYGVVEIVEKILDKPP.

Asp8 (nucleophile) is an active-site residue. Asp8 and Asp10 together coordinate Mg(2+). Residue Lys163 coordinates substrate. Mg(2+) is bound by residues Asp186 and Asp190.

The protein belongs to the archaeal SPP-like hydrolase family. The cofactor is Mg(2+).

It carries out the reaction 2-phosphoglycolate + H2O = glycolate + phosphate. Its function is as follows. Catalyzes the dephosphorylation of 2-phosphoglycolate. In Staphylothermus marinus (strain ATCC 43588 / DSM 3639 / JCM 9404 / F1), this protein is Phosphoglycolate phosphatase.